Reading from the N-terminus, the 265-residue chain is Eukaryotic translation initiation factor 3 subunit J (265 aa).

Disordered regions lie at residues 1-113 (MPPS…DSDL) and 215-237 (SNEKMKEERAADKGSKKTKAAKT). A compositionally biased stretch (acidic residues) spans 27–45 (DEEDGDVLDSWDAADDSEV). A coiled-coil region spans residues 43–95 (SEVEREKAAKAAEAKAKAEAEAAANKKSKAQRIAEHKTRRKAAEDEEDDESDE). Over residues 46–62 (EREKAAKAAEAKAKAEA) the composition is skewed to basic and acidic residues. Positions 86–97 (EDEEDDESDEDE) are enriched in acidic residues. Basic and acidic residues-rich tracts occupy residues 98-113 (AEKRARLRRTEKDSDL) and 217-229 (EKMKEERAADKGS).

The protein belongs to the eIF-3 subunit J family. As to quaternary structure, component of the eukaryotic translation initiation factor 3 (eIF-3) complex.

It is found in the cytoplasm. Its function is as follows. Component of the eukaryotic translation initiation factor 3 (eIF-3) complex, which is involved in protein synthesis of a specialized repertoire of mRNAs and, together with other initiation factors, stimulates binding of mRNA and methionyl-tRNAi to the 40S ribosome. The eIF-3 complex specifically targets and initiates translation of a subset of mRNAs involved in cell proliferation. The polypeptide is Eukaryotic translation initiation factor 3 subunit J (hcr1) (Emericella nidulans (strain FGSC A4 / ATCC 38163 / CBS 112.46 / NRRL 194 / M139) (Aspergillus nidulans)).